A 238-amino-acid polypeptide reads, in one-letter code: MRSGVIAQKVGMTRVFTEAGEHIPVTVLKLGNCQVVGHRTEEKNGYVALQLGSGSRKTVYMPKAERGQFAVAKVEPKRRVEEFRVTADAMIPVGAEIQADHFVVGQFVDVTGTSVGKGFAGGMKRWNFGGLRATHGVSISHRSIGSTGGRQDPGKTWKNKKMPGHMGVDRITTLNLRVVQLDVERGLILVEGAVPGSKGGWIRVRDAVKKPLPKEAPKPGKFKVAGGEAEAAAQQEGA.

Disordered regions lie at residues 140 to 164 (SHRS…KMPG) and 212 to 238 (LPKE…QEGA). Gln151 bears the N5-methylglutamine mark. Positions 225–238 (AGGEAEAAAQQEGA) are enriched in low complexity.

This sequence belongs to the universal ribosomal protein uL3 family. Part of the 50S ribosomal subunit. Forms a cluster with proteins L14 and L19. In terms of processing, methylated by PrmB.

In terms of biological role, one of the primary rRNA binding proteins, it binds directly near the 3'-end of the 23S rRNA, where it nucleates assembly of the 50S subunit. The chain is Large ribosomal subunit protein uL3 from Bradyrhizobium diazoefficiens (strain JCM 10833 / BCRC 13528 / IAM 13628 / NBRC 14792 / USDA 110).